The sequence spans 78 residues: Probable two-component-system connector protein YcgZ (78 aa).

Probably a connector protein for RcsB/C regulation of biofilm formation, providing additional signal input into the two-component signaling pathway. Partially antagonizes the activities of YmgA and AriR, proteins that, via the Rcs phosphorelay, promote the synthesis of colanic acid, an exopolysaccharide and matrix component. The sequence is that of Probable two-component-system connector protein YcgZ (ycgZ) from Escherichia coli (strain K12).